Reading from the N-terminus, the 222-residue chain is Charged multivesicular body protein 4a (222 aa).

Disordered regions lie at residues Met1–Glu21 and Val180–Glu211. Residues Met1–Ala116 are interaction with phosphoinosides. Residues Met1–Met150 form an intramolecular interaction with C-terminus region. 2 coiled-coil regions span residues Glu20–Thr105 and Asp155–Val180. An intramolecular interaction with N-terminus region spans residues Gly151–Ser222. The residue at position 196 (Ser196) is a Phosphoserine.

It belongs to the SNF7 family. As to quaternary structure, probable core component of the endosomal sorting required for transport complex III (ESCRT-III). ESCRT-III components are thought to multimerize to form a flat lattice on the perimeter membrane of the endosome. Several assembly forms of ESCRT-III may exist that interact and act sequentially. Self-associates; overexpression leads to the assembly of filaments that curve and associate to create circular rings. Interacts with CHMP2A. Interacts with CHMP3; the interaction requires the release of CHMP4A autoinhibition. Interacts with CHMP4B. Interacts with CHMP4C. Interacts with CHMP6. Interacts with VPS4A. Interacts with PDCD6IP; the interaction is direct. In terms of tissue distribution, widely expressed. Expressed at higher level in heart, kidney, liver and skeletal muscle. Also expressed in brain, placenta, lung and pancreas.

It localises to the cytoplasmic vesicle membrane. The protein resides in the late endosome membrane. Probable core component of the endosomal sorting required for transport complex III (ESCRT-III) which is involved in multivesicular bodies (MVBs) formation and sorting of endosomal cargo proteins into MVBs. MVBs contain intraluminal vesicles (ILVs) that are generated by invagination and scission from the limiting membrane of the endosome and mostly are delivered to lysosomes enabling degradation of membrane proteins, such as stimulated growth factor receptors, lysosomal enzymes and lipids. The MVB pathway appears to require the sequential function of ESCRT-O, -I,-II and -III complexes. ESCRT-III proteins mostly dissociate from the invaginating membrane before the ILV is released. The ESCRT machinery also functions in topologically equivalent membrane fission events, such as the terminal stages of cytokinesis and the budding of enveloped viruses (HIV-1 and other lentiviruses). ESCRT-III proteins are believed to mediate the necessary vesicle extrusion and/or membrane fission activities, possibly in conjunction with the AAA ATPase VPS4. When overexpressed, membrane-assembled circular arrays of CHMP4A filaments can promote or stabilize negative curvature and outward budding. Via its interaction with PDCD6IP involved in HIV-1 p6- and p9-dependent virus release. CHMP4A/B/C are required for the exosomal release of SDCBP, CD63 and syndecan. This is Charged multivesicular body protein 4a (CHMP4A) from Homo sapiens (Human).